The chain runs to 816 residues: Probable E3 ubiquitin-protein ligase hulA (816 aa).

Residues 1 to 112 (MGSNLPAQPN…QMGGDEMLTR (112 aa)) form the C2 domain. Disordered stretches follow at residues 134-238 (NLST…WERR) and 253-353 (RTTT…YFVD). Composition is skewed to polar residues over residues 151-168 (MQPS…ASTP), 177-202 (ADPT…STIV), 217-226 (SRTNLSSFED), and 253-270 (RTTT…QTSR). The WW 1 domain occupies 229–262 (GRLPAGWERREDNLGRTYYVDHNTRTTTWTRPSN). A compositionally biased stretch (basic and acidic residues) spans 279–294 (LERRAHQSRMLPEDRT). Over residues 295-309 (GASSPNLQENQQQAQ) the composition is skewed to polar residues. The span at 310-333 (TPPAGGSASAVSMMATGATTAGTG) shows a compositional bias: low complexity. 2 consecutive WW domains span residues 333 to 366 (GELP…DPRR) and 393 to 426 (GPLP…DPRL). The HECT domain maps to 482-816 (SASDLKKRLM…VEETLGFGQE (335 aa)). The Glycyl thioester intermediate role is filled by cysteine 784.

The protein belongs to the RSP5/NEDD4 family. Interacts with creD.

It is found in the cytoplasm. It carries out the reaction S-ubiquitinyl-[E2 ubiquitin-conjugating enzyme]-L-cysteine + [acceptor protein]-L-lysine = [E2 ubiquitin-conjugating enzyme]-L-cysteine + N(6)-ubiquitinyl-[acceptor protein]-L-lysine.. It functions in the pathway protein modification; protein ubiquitination. Functionally, E3 ubiquitin-protein ligase which accepts ubiquitin from an E2 ubiquitin-conjugating enzyme in the form of a thioester and then directly transfers the ubiquitin to targeted substrates. Probably involved in the regulatory network controlling carbon source utilization. The chain is Probable E3 ubiquitin-protein ligase hulA (hulA) from Aspergillus oryzae (strain ATCC 42149 / RIB 40) (Yellow koji mold).